The chain runs to 375 residues: MQKLAVYVYIYLFMQIAVDPVALDGSSQPTENAEKDGLCNACTWRQNTKSSRIEAIKIQILSKLRLEQAPNISRDVIKQLLPKAPPLQELIDQYDVQRDDSSDGSLEDDDYHATTETIITMPTESDFLVQMEGKPKCCFFKFSSKIQYNKVVKAQLWIYLRQVQKPTTVFVQILRLIKPMKDGTRYTGIRSLKLDMNPGTGIWQSIDVKTVLQNWLKQPESNLGIEIKAFDETGRDLAVTFPGPGEDGLNPFLEVRVTDTPKRSRRDFGLDCDEHSTESRCCRYPLTVDFEAFGWDWIIAPKRYKANYCSGECEFVFLQKYPHTHLVHQANPRGSAGPCCTPTKMSPINMLYFNGKEQIIYGKIPAMVVDRCGCS.

The N-terminal stretch at 1 to 23 (MQKLAVYVYIYLFMQIAVDPVAL) is a signal peptide. Residues 24–266 (DGSSQPTENA…VTDTPKRSRR (243 aa)) constitute a propeptide that is removed on maturation. Residue asparagine 71 is glycosylated (N-linked (GlcNAc...) asparagine). 4 cysteine pairs are disulfide-bonded: cysteine 272-cysteine 282, cysteine 281-cysteine 340, cysteine 309-cysteine 372, and cysteine 313-cysteine 374.

It belongs to the TGF-beta family. In terms of assembly, homodimer; disulfide-linked.

Its subcellular location is the secreted. Acts specifically as a negative regulator of skeletal muscle growth. In Gallus gallus (Chicken), this protein is Growth/differentiation factor 8 (MSTN).